The sequence spans 206 residues: Large ribosomal subunit protein uL4 (206 aa).

This sequence belongs to the universal ribosomal protein uL4 family. Part of the 50S ribosomal subunit.

In terms of biological role, one of the primary rRNA binding proteins, this protein initially binds near the 5'-end of the 23S rRNA. It is important during the early stages of 50S assembly. It makes multiple contacts with different domains of the 23S rRNA in the assembled 50S subunit and ribosome. Its function is as follows. Forms part of the polypeptide exit tunnel. The polypeptide is Large ribosomal subunit protein uL4 (Desulfatibacillum aliphaticivorans).